We begin with the raw amino-acid sequence, 341 residues long: D-aspartate oxidase (341 aa).

FAD contacts are provided by aspartate 36, lysine 37, threonine 43, serine 44, methionine 50, glycine 307, isoleucine 311, and serine 312. The Microbody targeting signal motif lies at 339 to 341 (SNL).

The protein belongs to the DAMOX/DASOX family. In terms of assembly, monomer. Interacts with PEX5; the interaction is direct and required for localization of DDO to the peroxisome. Interacts with DAOA; the interaction is direct and increases the degradation rate of DDO. It depends on FAD as a cofactor. In terms of processing, may be S-nitrosylated. In terms of tissue distribution, expressed in epithelial cells of the proximal nephron tubules in the renal cortex (at protein level). In the brain, expressed in the frontal, temporal, and occipital lobes of the cortex, hippocampus, striatum, diencephalon, brainstem, cerebellum, spinal cord, plexus choroiderus and ependyma (at protein level). Expression is increased in the prefrontal cortex of schizophrenic patients. Levels are normal in the superior frontal gyrus of patients with Alzheimer's disease.

The protein localises to the peroxisome matrix. It localises to the cytoplasm. The protein resides in the cytosol. It carries out the reaction D-aspartate + O2 + H2O = oxaloacetate + H2O2 + NH4(+). The catalysed reaction is D-glutamate + O2 + H2O = H2O2 + 2-oxoglutarate + NH4(+). Inhibited by the benzodiazepine olanzapine. Inhibited by aminooxyacetic acid, thiolactomycin, malonate and meso-tartrate. Clozapine, haloperidol and chlorpromazine have no effect on activity. Not inhibited by sodium, potassium, magnesium, iron, calcium, cobalt, copper, nickel, manganese or zinc ions. Not inhibited by AMP, ADP, ATP, or cAMP. Not inhibited by pyridoxal 5'-phosphate. Selectively catalyzes the oxidative deamination of acidic amino acids. Suppresses the level of D-aspartate in the brain, an amino acid that can act as an agonist for glutamate receptors. Protects the organism from the toxicity of D-amino acids. May also function in the intestine. The protein is D-aspartate oxidase (DDO) of Homo sapiens (Human).